Consider the following 480-residue polypeptide: Proline--tRNA ligase (480 aa).

The protein belongs to the class-II aminoacyl-tRNA synthetase family. ProS type 3 subfamily. In terms of assembly, homodimer.

The protein localises to the cytoplasm. It carries out the reaction tRNA(Pro) + L-proline + ATP = L-prolyl-tRNA(Pro) + AMP + diphosphate. Catalyzes the attachment of proline to tRNA(Pro) in a two-step reaction: proline is first activated by ATP to form Pro-AMP and then transferred to the acceptor end of tRNA(Pro). The chain is Proline--tRNA ligase from Pyrococcus horikoshii (strain ATCC 700860 / DSM 12428 / JCM 9974 / NBRC 100139 / OT-3).